Here is a 339-residue protein sequence, read N- to C-terminus: Methyltransferase ptaI (339 aa).

It belongs to the methyltransferase superfamily.

Its pathway is secondary metabolite biosynthesis. Its function is as follows. Methyltransferase; part of the gene cluster that mediates the biosynthesis of pestheic acid, a diphenyl ether which is a biosynthetic precursor of the unique chloropupukeananes. The biosynthesis initiates from condensation of acetate and malonate units catalyzed by the non-reducing PKS ptaA. As the ptaA protein is TE/CLC domain-deficient, hydrolysis and Claisen cyclization of the polyketide could be catalyzed by ptaB containing a beta-lactamase domain. The ptaB protein might hydrolyze the thioester bond between the ACP of ptaA and the intermediate to release atrochrysone carboxylic acid, which is spontaneously dehydrated to form endocrocin anthrone. Endocrocin anthrone is then converted to endocrocin, catalyzed by the anthrone oxygenase ptaC. Spontaneous decarboxylation of endocrocin occurs to generate emodin. An O-methyltransferase (ptaH or ptaI) could methylate emodin to form physcion. PtaJ could then catalyze the oxidative cleavage of physcion, and rotation of the intermediate could then afford desmethylisosulochrin. PtaF, a putative NADH-dependent oxidoreductase, might also participate in the oxidative cleavage step. Desmethylisosulochrin is then transformed by another O-methyltransferase (ptaH or ptaI) to form isosulochrin. Chlorination of isosulochrin by ptaM in the cyclohexadienone B ring then produces chloroisosulochrin. PtaE is responsible for the oxidative coupling reactions of both benzophenones isosulouchrin and chloroisosulochrin to RES-1214-1 and pestheic acid respectively, regardless of chlorination. This chain is Methyltransferase ptaI, found in Pestalotiopsis fici (strain W106-1 / CGMCC3.15140).